The following is a 305-amino-acid chain: Aquaporin NIP6-1 (305 aa).

A disordered region spans residues Met-1–Gly-30. Residues Pro-7–Pro-23 are compositionally biased toward low complexity. 2 consecutive transmembrane segments (helical) span residues Leu-82–Val-102 and Thr-111–Gly-131. Residues Asn-139–Ala-141 carry the NPA 1 motif. The next 3 helical transmembrane spans lie at Val-159–Phe-179, Leu-194–Ala-214, and Ala-221–Ala-241. The NPA 2 motif lies at Asn-250–Val-252. A helical transmembrane segment spans residues Ile-267–Ile-287. Position 302 is a phosphoserine (Ser-302).

This sequence belongs to the MIP/aquaporin (TC 1.A.8) family. NIP (TC 1.A.8.12) subfamily. As to expression, expressed in roots.

It localises to the membrane. In terms of biological role, transports glycerol, urea and formamide, in Xenopus laevis oocytes. Very low water transport activity. The protein is Aquaporin NIP6-1 (NIP6-1) of Arabidopsis thaliana (Mouse-ear cress).